We begin with the raw amino-acid sequence, 665 residues long: SH3 domain-containing kinase-binding protein 1 (665 aa).

SH3 domains lie at 1–58 (MVEA…EIKK) and 98–157 (RRRR…ELSG). Ser-156, Ser-159, Ser-183, and Ser-230 each carry phosphoserine. Positions 159 to 200 (SDELGISQDEQLSKSSLRETTGSESDGGDSSSTKSEGANGTV) are disordered. Positions 177-195 (ETTGSESDGGDSSSTKSEG) are enriched in low complexity. Thr-254 carries the phosphothreonine modification. Residues 267-328 (KSKDYCKVIF…PDNFVKLLPP (62 aa)) form the SH3 3 domain. Disordered stretches follow at residues 328 to 444 (PDFE…LAGS) and 467 to 610 (DSVV…AAVE). Over residues 355–390 (TERKHEIKKIPPERPEMLPNRTEEKERPEREPKLDL) the composition is skewed to basic and acidic residues. Ser-436 is modified (phosphoserine). The segment covering 469–484 (VVSSTEKLSHPTTSRP) has biased composition (polar residues). Residues 491–510 (PPSQSLTSSSLSSPDIFDSP) show a composition bias toward low complexity. Phosphoserine is present on residues Ser-509, Ser-511, and Ser-521. Residues 517–531 (EEHISLAHRGVDASK) are compositionally biased toward basic and acidic residues. Residues 535-546 (KTVTISQVSDNK) show a composition bias toward polar residues. Positions 564-582 (APLSSAAPSPLSSSLGTAG) are enriched in low complexity. Position 587 is a phosphoserine (Ser-587). A coiled-coil region spans residues 602–664 (AASSQAAVEE…VNDIKKALQS (63 aa)).

In terms of assembly, can self-associate and form homotetramers. Interacts with CD2, F-actin capping protein, PIK3R3, GRB2, EGFR, MET, BLNK, MAP3K4, PDCD6IP, SPRY2, ARHGAP17, ARHGAP27, MAGI2, CRK, BCAR1, SOS1, ASAP1, ARAP3, HIP1R, SYNJ2, INPP5D and STAP1. Interacts with E3 ubiquitin-protein ligases CBL and CBLB, but does not interact with CBLC. Two molecules of SH3KBP1 seem to bind through their respective SH3 1 domain to one molecule of CBLB. The interaction with CBL or CBLB and EGFR is increased upon EGF stimulation. The interaction with CBL is attenuated by PDCD6IP. Interacts (via SH3 domains) with ARAP1. The interaction is independent of EGF and does not affect ARAP1 GTPase-activating activity but is involved in regulating ubiquitination and endocytic trafficking of EGFR. ARAP1 competes with CBL for binding to SH3KBP1 and prevents interaction of CBL with SH3KBP1; this is likely to regulate SH3KBP1-mediated internalization of EGFR. Interacts through its proline-rich region with the SH3 domain of endophilins SH3GL1, SH3GL2 and SH3GL3. The SH3KBP1-endophilin complex seems to associate with a complex containing the phosphorylated receptor (EGFR or MET) and phosphorylated CBL. Probably associates with ASAP1 and phosphorylated EGFR. Probably part of a complex consisting of at least SH3KBP1, ASAP1 and ARAP3. Interacts with focal adhesion kinases PTK2/FAK1 and PTK2B/PYK2, probably as a dimer. Interacts with DAB2 and probably associates with chathrin through its interaction with DAB2. Part of a complex consisting of SH3KBP1, DAB2, and clathrin heavy chain. DAB2 and clathrin dissociate from SH3KBP1 following growth factor treatment, enabling interaction with CBL. Interacts with DDN and probably associates with MAGI2 through its interaction with DDN. Interacts with the SH3 domains of SRC tyrosine-protein kinases SRC, LCK, LYN, FGR, FYN and HCK. Interacts with TRADD, BIRC2, TRAF1, TRAF2 and TNFR1, and the association with a TNFR1-associated complex upon stimulation with TNF-alpha seems to be mediated by SRC. Interacts (via SH3 domains) with SHKBP1 (via PXXXPR motifs). Interaction with CBL is abolished in the presence of SHKBP1. Interacts (via SH3 domains) with ZFP36 (via extreme C-terminal region). Interacts with MAP3K4; this interaction enhances the association with ZFP36. (Microbial infection) Interacts (via SH3 domains) with Chikungunya virus non-structural protein 3 (via C-terminus); this interaction plays a role in initiation of viral replication. Post-translationally, monoubiquitinated by CBL and CBLB after EGF stimulation; probably on its C-terminus. Ubiquitously expressed. Also expressed in some cancer cell lines.

Its subcellular location is the cytoplasm. It is found in the cytoskeleton. It localises to the cytoplasmic vesicle membrane. The protein localises to the synapse. The protein resides in the synaptosome. Its subcellular location is the cell junction. It is found in the focal adhesion. Adapter protein involved in regulating diverse signal transduction pathways. Involved in the regulation of endocytosis and lysosomal degradation of ligand-induced receptor tyrosine kinases, including EGFR and MET/hepatocyte growth factor receptor, through an association with CBL and endophilins. The association with CBL, and thus the receptor internalization, may be inhibited by an interaction with PDCD6IP and/or SPRY2. Involved in regulation of ligand-dependent endocytosis of the IgE receptor. Attenuates phosphatidylinositol 3-kinase activity by interaction with its regulatory subunit. May be involved in regulation of cell adhesion; promotes the interaction between TTK2B and PDCD6IP. May be involved in the regulation of cellular stress response via the MAPK pathways through its interaction with MAP3K4. Is involved in modulation of tumor necrosis factor mediated apoptosis. Plays a role in the regulation of cell morphology and cytoskeletal organization. Required in the control of cell shape and migration. Has an essential role in the stimulation of B cell activation. The sequence is that of SH3 domain-containing kinase-binding protein 1 (SH3KBP1) from Homo sapiens (Human).